We begin with the raw amino-acid sequence, 447 residues long: Cytochrome c biogenesis protein CcsB (447 aa).

3 helical membrane-spanning segments follow: residues 28 to 48 (LRLA…GTVI), 87 to 107 (TWWY…CTFR), and 173 to 193 (IGPI…IWGA).

It belongs to the Ccs1/CcsB family. May interact with CcsA.

It is found in the cellular thylakoid membrane. Its function is as follows. Required during biogenesis of c-type cytochromes (cytochrome c6 and cytochrome f) at the step of heme attachment. The polypeptide is Cytochrome c biogenesis protein CcsB (Microcystis aeruginosa (strain NIES-843 / IAM M-2473)).